A 300-amino-acid polypeptide reads, in one-letter code: Bifunctional protein FolD 2 (300 aa).

Residues 165-167 (GRS), S190, and I231 each bind NADP(+).

It belongs to the tetrahydrofolate dehydrogenase/cyclohydrolase family. In terms of assembly, homodimer.

It carries out the reaction (6R)-5,10-methylene-5,6,7,8-tetrahydrofolate + NADP(+) = (6R)-5,10-methenyltetrahydrofolate + NADPH. The enzyme catalyses (6R)-5,10-methenyltetrahydrofolate + H2O = (6R)-10-formyltetrahydrofolate + H(+). The protein operates within one-carbon metabolism; tetrahydrofolate interconversion. Functionally, catalyzes the oxidation of 5,10-methylenetetrahydrofolate to 5,10-methenyltetrahydrofolate and then the hydrolysis of 5,10-methenyltetrahydrofolate to 10-formyltetrahydrofolate. The sequence is that of Bifunctional protein FolD 2 from Pseudomonas syringae pv. tomato (strain ATCC BAA-871 / DC3000).